We begin with the raw amino-acid sequence, 531 residues long: Aspartate--tRNA ligase, cytoplasmic (531 aa).

The interval Met-1–Gln-45 is disordered. Over residues Glu-8–Glu-32 the composition is skewed to basic and acidic residues. Residue Glu-259 participates in L-aspartate binding. Positions Gln-281–Lys-284 are aspartate. Arg-303 is an L-aspartate binding site. ATP contacts are provided by residues Arg-303–Glu-305, Arg-311–Met-313, and Glu-454. L-aspartate contacts are provided by Ser-457 and Arg-461. ATP is bound at residue Gly-502 to Arg-505.

Belongs to the class-II aminoacyl-tRNA synthetase family. Type 2 subfamily. In terms of assembly, homodimer.

The protein localises to the cytoplasm. It catalyses the reaction tRNA(Asp) + L-aspartate + ATP = L-aspartyl-tRNA(Asp) + AMP + diphosphate. The polypeptide is Aspartate--tRNA ligase, cytoplasmic (Caenorhabditis elegans).